Consider the following 1526-residue polypeptide: Myosin type-2 heavy chain 1 (1526 aa).

A Myosin N-terminal SH3-like domain is found at 22-73 (DDKRWVWISDPETAFTKAWIKEDLPDKKYVVRYNNSRDEKIVGEDEIDPVNP). Residues 77 to 755 (DRVNDMAELT…VLAELEERRV (679 aa)) enclose the Myosin motor domain. Residue 170 to 177 (GESGAGKT) participates in ATP binding. Actin-binding stretches follow at residues 634–656 (LNQL…VPNE) and 734–748 (RIGV…GVLA). In terms of domain architecture, IQ spans 758–787 (LQRLMTMLQTRIRGFLQRKIFQKRLKDIQA). Residues 875–1244 (ALDKEEILRR…SLTKQVNELS (370 aa)) are a coiled coil. Residue S1044 is modified to Phosphoserine.

Belongs to the TRAFAC class myosin-kinesin ATPase superfamily. Myosin family. As to quaternary structure, binds to cdc4 and rlc1.

In terms of biological role, required for cell division. It is a component of the cdc12 'spot', a structure thought to mark the site of septation. May work in conjunction with myo3. This Schizosaccharomyces pombe (strain 972 / ATCC 24843) (Fission yeast) protein is Myosin type-2 heavy chain 1 (myo2).